The following is a 299-amino-acid chain: Probable lipid kinase YegS (299 aa).

One can recognise a DAGKc domain in the interval 2 to 133 (AEFPASLLIL…IDMAQVNKQT (132 aa)). ATP is bound by residues Thr40, 66–72 (GDGTINE), and Thr95. Mg(2+)-binding residues include Leu215, Asp218, and Leu220. Catalysis depends on Glu271, which acts as the Proton acceptor.

It belongs to the diacylglycerol/lipid kinase family. YegS lipid kinase subfamily. Mg(2+) is required as a cofactor. The cofactor is Ca(2+).

It is found in the cytoplasm. In terms of biological role, probably phosphorylates lipids; the in vivo substrate is unknown. This Shigella dysenteriae serotype 1 (strain Sd197) protein is Probable lipid kinase YegS.